Consider the following 390-residue polypeptide: uncharacterized protein (390 aa).

This sequence belongs to the arsA ATPase family.

This is an uncharacterized protein from Streptomyces coelicolor (strain ATCC BAA-471 / A3(2) / M145).